The primary structure comprises 334 residues: HTH-type transcriptional repressor PurR (334 aa).

The 55-residue stretch at 2-56 (ATIKDVARLAGVSTTTVSHVINKTRFVAEATQEKVMKAVDELNYAPSAVARSLKC) folds into the HTH lacI-type domain. The segment at residues 4–23 (IKDVARLAGVSTTTVSHVIN) is a DNA-binding region (H-T-H motif). The DNA-binding element occupies 48-56 (SAVARSLKC). Hypoxanthine is bound by residues F73, K189, F220, and D274.

As to quaternary structure, homodimer.

It participates in purine metabolism; purine nucleotide biosynthesis [regulation]. Is the main repressor of the genes involved in the de novo synthesis of purine nucleotides, regulating purB, purC, purEK, purF, purHD, purL, purMN and guaBA expression. PurR is allosterically activated to bind its cognate DNA by binding the purine corepressors, hypoxanthine or guanine, thereby effecting transcription repression. This chain is HTH-type transcriptional repressor PurR, found in Vibrio parahaemolyticus serotype O3:K6 (strain RIMD 2210633).